A 492-amino-acid chain; its full sequence is GDP-Man:Man(3)GlcNAc(2)-PP-Dol alpha-1,2-mannosyltransferase (492 aa).

Residues 1-19 (MAAGERSWCLCKLLRFFYS) are Lumenal-facing. A helical transmembrane segment spans residues 20 to 40 (LFFPGLIVCGTLCVCLVIVLW). The Cytoplasmic segment spans residues 41-233 (GIRLLLQRKK…TRNPFLSKVK (193 aa)). Positions 234–254 (LIYYYLFAFIYGLVGSCSDVV) form an intramembrane region, helical. Residues 255–399 (MVNSSWTLNH…IGLHTMWNEH (145 aa)) are Cytoplasmic-facing. An intramembrane region (helical) is located at residues 400–420 (FGIGVVECMAAGTIILAHNSG). Topologically, residues 421–492 (GPKLDIVVPH…FLSSVEKLFK (72 aa)) are cytoplasmic.

It belongs to the glycosyltransferase group 1 family. Glycosyltransferase 4 subfamily.

Its subcellular location is the endoplasmic reticulum membrane. It catalyses the reaction an alpha-D-Man-(1-&gt;3)-[alpha-D-Man-(1-&gt;6)]-beta-D-Man-(1-&gt;4)-beta-D-GlcNAc-(1-&gt;4)-alpha-D-GlcNAc-diphospho-di-trans,poly-cis-dolichol + 2 GDP-alpha-D-mannose = an alpha-D-Man-(1-&gt;2)-alpha-D-Man-(1-&gt;2)-alpha-D-Man-(1-&gt;3)-[alpha-D-Man-(1-&gt;6)]-beta-D-Man-(1-&gt;4)-beta-D-GlcNAc-(1-&gt;4)-alpha-D-GlcNAc-diphospho-di-trans,poly-cis-dolichol + 2 GDP + 2 H(+). It participates in protein modification; protein glycosylation. Its function is as follows. GDP-Man:Man(3)GlcNAc(2)-PP-Dol alpha-1,2-mannosyltransferase that operates in the biosynthetic pathway of dolichol-linked oligosaccharides, the glycan precursors employed in protein asparagine (N)-glycosylation. The assembly of dolichol-linked oligosaccharides begins on the cytosolic side of the endoplasmic reticulum membrane and finishes in its lumen. The sequential addition of sugars to dolichol pyrophosphate produces dolichol-linked oligosaccharides containing fourteen sugars, including two GlcNAcs, nine mannoses and three glucoses. Once assembled, the oligosaccharide is transferred from the lipid to nascent proteins by oligosaccharyltransferases. Catalyzes, on the cytoplasmic face of the endoplasmic reticulum, the addition of the fourth and fifth mannose residues to the dolichol-linked oligosaccharide chain, to produce Man(5)GlcNAc(2)-PP-dolichol core oligosaccharide. Man(5)GlcNAc(2)-PP-dolichol is a substrate for ALG3, the following enzyme in the biosynthetic pathway. The protein is GDP-Man:Man(3)GlcNAc(2)-PP-Dol alpha-1,2-mannosyltransferase of Homo sapiens (Human).